A 153-amino-acid polypeptide reads, in one-letter code: Endoribonuclease YbeY (153 aa).

Zn(2+)-binding residues include His114, His118, and His124.

It belongs to the endoribonuclease YbeY family. Zn(2+) serves as cofactor.

It localises to the cytoplasm. Single strand-specific metallo-endoribonuclease involved in late-stage 70S ribosome quality control and in maturation of the 3' terminus of the 16S rRNA. In Shewanella baltica (strain OS155 / ATCC BAA-1091), this protein is Endoribonuclease YbeY.